Consider the following 773-residue polypeptide: Transducin-like enhancer protein 4 (773 aa).

3 disordered regions span residues 1–22 (MIRDLSKMYPQTRHPAPHQPAQ), 140–162 (HGHGLPVPLTPHPSGLQPPAIPP), and 182–360 (LPIK…ASSL). Residues 1 to 136 (MIRDLSKMYP…AIIGQQLQAQ (136 aa)) form a q domain region. Residues 137 to 204 (HLSHGHGLPV…HQRDRDSIKS (68 aa)) are GP domain. Residues 183 to 202 (PIKDEKKHHDNDHQRDRDSI) are compositionally biased toward basic and acidic residues. The segment covering 203-212 (KSSSVSPSAS) has biased composition (low complexity). The ccN domain stretch occupies residues 205 to 274 (SSVSPSASFR…SPRGSPAHSP (70 aa)). A phosphoserine mark is found at S208, S212, and S222. The segment covering 215–252 (GAEKHRNSADYSSESKKQKTEEKEIAARYDSDGEKSDD) has biased composition (basic and acidic residues). K237 is modified (N6-acetyllysine). Residues S245, S250, S269, and S273 each carry the phosphoserine modification. The segment covering 273-289 (SPRENGLDKTRLLKKDA) has biased composition (basic and acidic residues). The SP domain stretch occupies residues 275-452 (RENGLDKTRL…PGGKPAYSFH (178 aa)). K281 carries the post-translational modification N6-acetyllysine. Residues 290 to 305 (PISPASIASSSSTPSS) are compositionally biased toward low complexity. S292 carries the phosphoserine modification. Residues 317-328 (TTPVSKSNTPTP) are compositionally biased toward polar residues. A Phosphothreonine modification is found at T318. A phosphoserine mark is found at S321 and S323. A phosphothreonine mark is found at T325, T327, T334, and T340. A Phosphoserine modification is found at S419. WD repeat units lie at residues 485–523 (NHGEVVCAVTISNPTRHVYTGGKGCVKVWDISHPGNKSP), 531–570 (NRDNYIRSCRLLPDGRTLIVGGEASTLSIWDLAAPTPRIK), 575–614 (SSAPACYALAISPDSKVCFSCCSDGNIAVWDLHNQTLVRQ), 617–656 (GHTDGASCIDISNDGTKLWTGGLDNTVRSWDLREGRQLQQ), 658–697 (DFTSQIFSLGYCPTGEWLAVGMENSNVEVLHVTKPDKYQL), 699–738 (LHESCVLSLKFAHCGKWFVSTGKDNLLNAWRTPYGASIFQ), and 740–773 (KESSSVLSCDISVDDKYIVTGSGDKKATVYEVIY).

It belongs to the WD repeat Groucho/TLE family. Homooligomer and heterooligomer with other family members. Interacts with PAX5. Interacts with LEF1, TCF7, TCF7L1 and TCF7L2. Interacts with ZNF703; TLE4 may mediate ZNF703 transcriptional repression. Interacts with SIX3 and SIX6. Interacts with PAX2. Interacts with TLE1. In terms of processing, phosphorylated. PAX5 binding increases phosphorylation. Ubiquitinated by XIAP/BIRC4. As to expression, in all tissues examined, mostly in brain, and muscle.

It is found in the nucleus. In terms of biological role, transcriptional corepressor that binds to a number of transcription factors. Inhibits the transcriptional activation mediated by PAX5, and by CTNNB1 and TCF family members in Wnt signaling. The effects of full-length TLE family members may be modulated by association with dominant-negative AES. Essential for the transcriptional repressor activity of SIX3 during retina and lens development and for SIX3 transcriptional auto-repression. Involved in transcriptional repression of GNRHR and enhances MSX1-mediated transcriptional repression of CGA/alpha-GSU. In Homo sapiens (Human), this protein is Transducin-like enhancer protein 4 (TLE4).